The following is a 271-amino-acid chain: Putative protein FAM220BP (271 aa).

This Homo sapiens (Human) protein is Putative protein FAM220BP (FAM220BP).